A 119-amino-acid polypeptide reads, in one-letter code: Large ribosomal subunit protein bL20 (119 aa).

The protein belongs to the bacterial ribosomal protein bL20 family.

Its function is as follows. Binds directly to 23S ribosomal RNA and is necessary for the in vitro assembly process of the 50S ribosomal subunit. It is not involved in the protein synthesizing functions of that subunit. This chain is Large ribosomal subunit protein bL20, found in Bradyrhizobium sp. (strain ORS 278).